We begin with the raw amino-acid sequence, 719 residues long: Nucleolar complex protein 2 homolog (719 aa).

Residues Met1–Pro24 show a composition bias toward basic residues. Disordered regions lie at residues Met1 to Lys67, Leu86 to Lys136, and Ala643 to Asp719. Over residues Pro25–Gly42 the composition is skewed to basic and acidic residues. Residues Glu89 to Asp130 show a composition bias toward acidic residues. Basic and acidic residues predominate over residues Ala643–Ala661.

This sequence belongs to the NOC2 family.

It is found in the nucleus. Functionally, required for normal somatic gonad development and for regulation of germline development and proliferation. This Caenorhabditis briggsae protein is Nucleolar complex protein 2 homolog (pro-2).